The primary structure comprises 611 residues: MKNPLRSSFSTEGRRMAGARALWRANGMKEEQFGKPIIAIVNSFTQFVPGHTHLHEIGQLVKAEIEKQGCFAAEFNTIAIDDGIAMGHDGMLYSLPSRDIIADSVEYMVNAHKADAMVCISNCDKITPGMLMASMRLNIPTVFVSGGPMEAGELDGRHLDLIDAMIESADTSVSDERIEQVERHACPGCGCCSGMFTANSMNCLNEAIGLALPGNGTIVATHKNRIQLFRDAAKQIVENAYKYYRDGDDSVLPRNIATRQAFLNAMSLDIAMGGSTNTVLHLLAVAQEAGADFHMEDIDMLSRKTPCLCKVAPNTHTYHVQDVNRAGGILGIMNELMKAGLVDGSTRRADGLTLAEAVDKYAVTSPNVTEEAIRKYKSAPAHRFSIQMGSQESYYKELDTDRAEGCIRDVEHAYSKDGGLAVLRGNIALDGCVVKTAGVDESIWKFSGPAKVFDSQDAACEGILGGKVVSGDVVVITYEGPKGGPGMQEMLYPTSYIKSRHLGKECALITDGRFSGGTSGLSIGHISPEAASGGAIGLVRDGDIIEINIPERSINVRLSDEELAERRKAEEARGKKAFTPPTRQREVSKALRAYGKMVSSADKGGVRIVED.

Aspartate 82 is a Mg(2+) binding site. [2Fe-2S] cluster is bound at residue cysteine 123. The Mg(2+) site is built by aspartate 124 and lysine 125. Lysine 125 bears the N6-carboxylysine mark. Position 192 (cysteine 192) interacts with [2Fe-2S] cluster. Glutamate 489 is a Mg(2+) binding site. Serine 515 serves as the catalytic Proton acceptor. The segment covering 565–574 (ERRKAEEARG) has biased composition (basic and acidic residues). Positions 565-586 (ERRKAEEARGKKAFTPPTRQRE) are disordered.

This sequence belongs to the IlvD/Edd family. As to quaternary structure, homodimer. [2Fe-2S] cluster is required as a cofactor. The cofactor is Mg(2+).

It carries out the reaction (2R)-2,3-dihydroxy-3-methylbutanoate = 3-methyl-2-oxobutanoate + H2O. It catalyses the reaction (2R,3R)-2,3-dihydroxy-3-methylpentanoate = (S)-3-methyl-2-oxopentanoate + H2O. Its pathway is amino-acid biosynthesis; L-isoleucine biosynthesis; L-isoleucine from 2-oxobutanoate: step 3/4. It participates in amino-acid biosynthesis; L-valine biosynthesis; L-valine from pyruvate: step 3/4. In terms of biological role, functions in the biosynthesis of branched-chain amino acids. Catalyzes the dehydration of (2R,3R)-2,3-dihydroxy-3-methylpentanoate (2,3-dihydroxy-3-methylvalerate) into 2-oxo-3-methylpentanoate (2-oxo-3-methylvalerate) and of (2R)-2,3-dihydroxy-3-methylbutanoate (2,3-dihydroxyisovalerate) into 2-oxo-3-methylbutanoate (2-oxoisovalerate), the penultimate precursor to L-isoleucine and L-valine, respectively. The polypeptide is Dihydroxy-acid dehydratase (Parabacteroides distasonis (strain ATCC 8503 / DSM 20701 / CIP 104284 / JCM 5825 / NCTC 11152)).